A 142-amino-acid polypeptide reads, in one-letter code: Gonadotropin subunit beta-2 (142 aa).

An N-terminal signal peptide occupies residues 1–24 (MLGLHVGTLMISLFLCILLEPVEG). 6 disulfide bridges follow: C30–C78, C44–C93, C47–C131, C55–C109, C59–C111, and C114–C121. Residue N34 is glycosylated (N-linked (GlcNAc...) asparagine).

The protein belongs to the glycoprotein hormones subunit beta family. In terms of assembly, heterodimer of an alpha and a beta chain.

It localises to the secreted. Functionally, involved in gametogenesis and steroidogenesis. The chain is Gonadotropin subunit beta-2 (cgbb) from Coregonus autumnalis (Arctic cisco).